Reading from the N-terminus, the 242-residue chain is Eukaryotic translation initiation factor 4E type 1B (242 aa).

The disordered stretch occupies residues 1-42 (MLAVEVSEAEGGIREWEEEEKEEEAAERTPTGEKSPNSPRTL). A compositionally biased stretch (acidic residues) spans 16–25 (WEEEEKEEEA). Residues 32-41 (GEKSPNSPRT) show a composition bias toward polar residues. Residues 62 to 65 (HPLQ) are EIF4EBP1/2/3 binding. Position 81-82 (81-82 (WQ)) interacts with mRNA. Positions 98–102 (WALYS) are EIF4EBP1/2/3 binding. 127-128 (WE) is a binding site for mRNA. The EIF4EBP1/2/3 binding stretch occupies residues 157–164 (ETLLCLIG). MRNA contacts are provided by residues 182 to 187 (RTKGDK) and 230 to 232 (TKS).

This sequence belongs to the eukaryotic initiation factor 4E family. As to quaternary structure, eIF4F is a multi-subunit complex, the composition of which varies with external and internal environmental conditions. It is composed of at least EIF4A, EIF4E and EIF4G.

In terms of biological role, recognizes and binds the 7-methylguanosine-containing mRNA cap during an early step in the initiation of protein synthesis and facilitates ribosome binding by inducing the unwinding of the mRNAs secondary structure. The chain is Eukaryotic translation initiation factor 4E type 1B (EIF4E1B) from Homo sapiens (Human).